The chain runs to 157 residues: SsrA-binding protein (157 aa).

The disordered stretch occupies residues 130–157; the sequence is HDKRQDMAKKDSQRRIQKELGQRQKGME. Residues 132–157 are compositionally biased toward basic and acidic residues; sequence KRQDMAKKDSQRRIQKELGQRQKGME.

The protein belongs to the SmpB family.

The protein resides in the cytoplasm. In terms of biological role, required for rescue of stalled ribosomes mediated by trans-translation. Binds to transfer-messenger RNA (tmRNA), required for stable association of tmRNA with ribosomes. tmRNA and SmpB together mimic tRNA shape, replacing the anticodon stem-loop with SmpB. tmRNA is encoded by the ssrA gene; the 2 termini fold to resemble tRNA(Ala) and it encodes a 'tag peptide', a short internal open reading frame. During trans-translation Ala-aminoacylated tmRNA acts like a tRNA, entering the A-site of stalled ribosomes, displacing the stalled mRNA. The ribosome then switches to translate the ORF on the tmRNA; the nascent peptide is terminated with the 'tag peptide' encoded by the tmRNA and targeted for degradation. The ribosome is freed to recommence translation, which seems to be the essential function of trans-translation. The polypeptide is SsrA-binding protein (Alkaliphilus metalliredigens (strain QYMF)).